A 397-amino-acid polypeptide reads, in one-letter code: CCA-adding enzyme (397 aa).

Residues glycine 8 and arginine 11 each contribute to the ATP site. Residues glycine 8 and arginine 11 each contribute to the CTP site. Positions 21 and 23 each coordinate Mg(2+). The ATP site is built by arginine 91, arginine 137, and arginine 140. Residues arginine 91, arginine 137, and arginine 140 each coordinate CTP. Residues 213 to 324 (NLDAAIATLK…LALFNGCDAW (112 aa)) form the HD domain.

It belongs to the tRNA nucleotidyltransferase/poly(A) polymerase family. Bacterial CCA-adding enzyme type 2 subfamily. Requires Mg(2+) as cofactor.

It catalyses the reaction a tRNA precursor + 2 CTP + ATP = a tRNA with a 3' CCA end + 3 diphosphate. The catalysed reaction is a tRNA with a 3' CCA end + 2 CTP + ATP = a tRNA with a 3' CCACCA end + 3 diphosphate. In terms of biological role, catalyzes the addition and repair of the essential 3'-terminal CCA sequence in tRNAs without using a nucleic acid template. Adds these three nucleotides in the order of C, C, and A to the tRNA nucleotide-73, using CTP and ATP as substrates and producing inorganic pyrophosphate. tRNA 3'-terminal CCA addition is required both for tRNA processing and repair. Also involved in tRNA surveillance by mediating tandem CCA addition to generate a CCACCA at the 3' terminus of unstable tRNAs. While stable tRNAs receive only 3'-terminal CCA, unstable tRNAs are marked with CCACCA and rapidly degraded. The sequence is that of CCA-adding enzyme from Alteromonas mediterranea (strain DSM 17117 / CIP 110805 / LMG 28347 / Deep ecotype).